The chain runs to 32 residues: Glutathione S-transferase 8.2 (32 aa).

Q21–S22 serves as a coordination point for glutathione.

Belongs to the GST superfamily. Alpha family. Homodimer. In terms of processing, the N-terminus is blocked.

It localises to the cytoplasm. The catalysed reaction is RX + glutathione = an S-substituted glutathione + a halide anion + H(+). Functionally, conjugation of reduced glutathione to a wide number of exogenous and endogenous hydrophobic electrophiles. This chain is Glutathione S-transferase 8.2, found in Dicentrarchus labrax (European seabass).